Here is a 551-residue protein sequence, read N- to C-terminus: Eukaryotic translation initiation factor 3 subunit D-2 (551 aa).

The tract at residues 91-154 is disordered; sequence TKPYQRGRYR…RNTQNMGRRF (64 aa). A compositionally biased stretch (basic residues) spans 95-113; sequence QRGRYRPNMRNNVRSRGRT. The segment covering 121–136 has biased composition (low complexity); the sequence is ASLGGSTAGGATASTT. The interval 290 to 304 is RNA gate; it reads QFDLLTVNETSVEPP. Residues 527 to 551 form a disordered region; the sequence is PENAFDSDGDEEEESSDPLSNSNDN. The span at 531–542 shows a compositional bias: acidic residues; that stretch reads FDSDGDEEEESS.

Belongs to the eIF-3 subunit D family. Component of the eukaryotic translation initiation factor 3 (eIF-3) complex. The eIF-3 complex interacts with pix.

It localises to the cytoplasm. In terms of biological role, mRNA cap-binding component of the eukaryotic translation initiation factor 3 (eIF-3) complex, which is involved in protein synthesis of a specialized repertoire of mRNAs and, together with other initiation factors, stimulates binding of mRNA and methionyl-tRNAi to the 40S ribosome. The eIF-3 complex specifically targets and initiates translation of a subset of mRNAs involved in cell proliferation. In the eIF-3 complex, eif3d specifically recognizes and binds the 7-methylguanosine cap of a subset of mRNAs. The protein is Eukaryotic translation initiation factor 3 subunit D-2 of Drosophila melanogaster (Fruit fly).